A 55-amino-acid polypeptide reads, in one-letter code: Large ribosomal subunit protein bL33 (55 aa).

The protein belongs to the bacterial ribosomal protein bL33 family.

In Methylocella silvestris (strain DSM 15510 / CIP 108128 / LMG 27833 / NCIMB 13906 / BL2), this protein is Large ribosomal subunit protein bL33.